Reading from the N-terminus, the 387-residue chain is Succinate--CoA ligase [ADP-forming] subunit beta (387 aa).

One can recognise an ATP-grasp domain in the interval 9-244; the sequence is KAIFADNGIP…ITEENPAERE (236 aa). ATP contacts are provided by residues Lys-46, 53–55, Glu-99, Ala-102, and Glu-107; that span reads GRG. Mg(2+)-binding residues include Asn-199 and Asp-213. Substrate-binding positions include Asn-264 and 321–323; that span reads GIV.

It belongs to the succinate/malate CoA ligase beta subunit family. Heterotetramer of two alpha and two beta subunits. Mg(2+) is required as a cofactor.

It catalyses the reaction succinate + ATP + CoA = succinyl-CoA + ADP + phosphate. The catalysed reaction is GTP + succinate + CoA = succinyl-CoA + GDP + phosphate. It participates in carbohydrate metabolism; tricarboxylic acid cycle; succinate from succinyl-CoA (ligase route): step 1/1. Its function is as follows. Succinyl-CoA synthetase functions in the citric acid cycle (TCA), coupling the hydrolysis of succinyl-CoA to the synthesis of either ATP or GTP and thus represents the only step of substrate-level phosphorylation in the TCA. The beta subunit provides nucleotide specificity of the enzyme and binds the substrate succinate, while the binding sites for coenzyme A and phosphate are found in the alpha subunit. The polypeptide is Succinate--CoA ligase [ADP-forming] subunit beta (Campylobacter jejuni subsp. jejuni serotype O:6 (strain 81116 / NCTC 11828)).